The sequence spans 456 residues: Protein translocase subunit SecY (456 aa).

Over 1-21 (MEQLKEKFEPLFSVLPQVKSP) the chain is Cytoplasmic. Residues 22 to 48 (GYRVPFREKLKWTGIILVLYFFLAQIP) form a helical membrane-spanning segment. The Extracellular segment spans residues 49–59 (LYGLSANAVDQ). The segment at residues 60–67 (FAQFRAVL) is an intramembrane region (helical). The chain crosses the membrane as a discontinuously helical span at residues 60 to 88 (FAQFRAVLAGNFGSILTLGIGPIVSASII). The stretch at 68-79 (AGNFGSILTLGI) is an intramembrane region. The helical intramembrane region spans 80 to 88 (GPIVSASII). Residues 89–109 (LQLLVGGKILKLDLSRHEDKA) lie on the Cytoplasmic side of the membrane. A helical membrane pass occupies residues 110–134 (FFQGLQKLLAIVFTFFEALIFVLTG). Topologically, residues 135 to 141 (SLAPSAP) are extracellular. A helical membrane pass occupies residues 142-166 (QFVWVLILQLTIGGILIIFLDEVVS). The Cytoplasmic segment spans residues 167-172 (KWGFGS). A helical membrane pass occupies residues 173–191 (GVGLFIAAGVSQEIIVGAF). The Extracellular segment spans residues 192-224 (NPLSAPTQPGVPAGRITGFLYLLFTGQSPDFQY). Residues 225 to 246 (YVLPVLALIAVFLVVVYAESMR) traverse the membrane as a helical segment. Residues 247-275 (VEIPISMGGGKRLSRGAVGKYPLRFIYAS) are Cytoplasmic-facing. A helical transmembrane segment spans residues 276–297 (NMPVILTSALLLNVQLLANVFQ). The Extracellular segment spans residues 298–334 (KLGYPILGTVSNGQAVDGLAYLLTAPRSIDALILDPF). A helical membrane pass occupies residues 335 to 354 (RVVFYAVVFIGLCVLFAWLW). At 355–397 (VEISNIGPRHVARQLYQMGMQIPGFRSSRGQFEKILKRYIPTI) the chain is on the cytoplasmic side. The chain crosses the membrane as a helical span at residues 398–416 (TILGGAFVGLLAFVADLTG). Topologically, residues 417–419 (SLG) are extracellular. The helical transmembrane segment at 420 to 434 (GGTGVLLTVGIVYRL) threads the bilayer. Residues 435-456 (YEEIAQEQLMDMHPILRSFLGD) lie on the Cytoplasmic side of the membrane.

It belongs to the SecY/SEC61-alpha family. In terms of assembly, component of the Sec protein translocase complex. Heterotrimer consisting of alpha (SecY), beta (SecG) and gamma (SecE) subunits. The heterotrimers can form oligomers, although 1 heterotrimer is thought to be able to translocate proteins. Interacts with the ribosome. May interact with SecDF, and other proteins may be involved.

The protein resides in the cell membrane. Functionally, the central subunit of the protein translocation channel SecYEG. Consists of two halves formed by TMs 1-5 and 6-10. These two domains form a lateral gate at the front which open onto the bilayer between TMs 2 and 7, and are clamped together by SecE at the back. The channel is closed by both a pore ring composed of hydrophobic SecY resides and a short helix (helix 2A) on the extracellular side of the membrane which forms a plug. The plug probably moves laterally to allow the channel to open. The ring and the pore may move independently. This is Protein translocase subunit SecY from Methanothermobacter thermautotrophicus (strain ATCC 29096 / DSM 1053 / JCM 10044 / NBRC 100330 / Delta H) (Methanobacterium thermoautotrophicum).